A 116-amino-acid chain; its full sequence is Large ribosomal subunit protein uL18 (116 aa).

Belongs to the universal ribosomal protein uL18 family. As to quaternary structure, part of the 50S ribosomal subunit; part of the 5S rRNA/L5/L18/L25 subcomplex. Contacts the 5S and 23S rRNAs.

Functionally, this is one of the proteins that bind and probably mediate the attachment of the 5S RNA into the large ribosomal subunit, where it forms part of the central protuberance. This chain is Large ribosomal subunit protein uL18, found in Acholeplasma laidlawii (strain PG-8A).